The primary structure comprises 199 residues: Pre-histone-like nucleoprotein (199 aa).

Ser-2 carries the N-acetylserine; by host modification. Positions 2–23 (SILISPSDNTGWGLGTGKMYGG) are excised as a propeptide. The residue at position 26 (Lys-26) is an N6-acetyllysine; by host. The Nuclear localization signal signature appears at 189–199 (RRKASVRRRRT).

This sequence belongs to the adenoviridae histone-like nucleoprotein family. In terms of assembly, interacts with the core-capsid bridging protein; this interaction bridges the virus core to the capsid. Interacts with host NPM1; this interaction might play a role in placing the pre-histone-like nucleoprotein on the viral DNA or regulating viral gene expression. Interacts with host HMGB1; this interaction inhibits host immune response. Post-translationally, cleaved near the N-terminus by the viral protease during virion maturation to form the mature protein.

It localises to the virion. Its subcellular location is the host nucleus. The protein localises to the host nucleolus. Plays a role in the inhibition of host immune response within the nucleus. Interacts with cellular nucleosomes and immobilizes the host immune danger signal HMGB1 on chromatin. In turn, prevents HMGB1 release out of the cell and thus decreases inflammation. Also plays a role in the wrapping and condensation of the viral DNA. May also promote viral genome import into the nucleus. The chain is Pre-histone-like nucleoprotein from Murine adenovirus A serotype 1 (MAdV-1).